The sequence spans 491 residues: Ketol-acid reductoisomerase (NADP(+)) (491 aa).

One can recognise a KARI N-terminal Rossmann domain in the interval 15-208; the sequence is AQLGKCRFMG…GGHRAGVLES (194 aa). Residues 45–48, Arg-68, Arg-76, Ser-78, and 108–110 each bind NADP(+); these read CGAQ and DKQ. The active site involves His-132. Gly-158 provides a ligand contact to NADP(+). 2 consecutive KARI C-terminal knotted domains span residues 209–344 and 345–484; these read SFVA…TAPQ and FEGK…MTDM. Positions 217, 221, 389, and 393 each coordinate Mg(2+). A substrate-binding site is contributed by Ser-414.

It belongs to the ketol-acid reductoisomerase family. Requires Mg(2+) as cofactor.

It carries out the reaction (2R)-2,3-dihydroxy-3-methylbutanoate + NADP(+) = (2S)-2-acetolactate + NADPH + H(+). The enzyme catalyses (2R,3R)-2,3-dihydroxy-3-methylpentanoate + NADP(+) = (S)-2-ethyl-2-hydroxy-3-oxobutanoate + NADPH + H(+). It functions in the pathway amino-acid biosynthesis; L-isoleucine biosynthesis; L-isoleucine from 2-oxobutanoate: step 2/4. It participates in amino-acid biosynthesis; L-valine biosynthesis; L-valine from pyruvate: step 2/4. Its function is as follows. Involved in the biosynthesis of branched-chain amino acids (BCAA). Catalyzes an alkyl-migration followed by a ketol-acid reduction of (S)-2-acetolactate (S2AL) to yield (R)-2,3-dihydroxy-isovalerate. In the isomerase reaction, S2AL is rearranged via a Mg-dependent methyl migration to produce 3-hydroxy-3-methyl-2-ketobutyrate (HMKB). In the reductase reaction, this 2-ketoacid undergoes a metal-dependent reduction by NADPH to yield (R)-2,3-dihydroxy-isovalerate. The sequence is that of Ketol-acid reductoisomerase (NADP(+)) from Salmonella dublin (strain CT_02021853).